The primary structure comprises 86 residues: DNA-directed RNA polymerase subunit omega (86 aa).

Belongs to the RNA polymerase subunit omega family. As to quaternary structure, the RNAP catalytic core consists of 2 alpha, 1 beta, 1 beta' and 1 omega subunit. When a sigma factor is associated with the core the holoenzyme is formed, which can initiate transcription.

The enzyme catalyses RNA(n) + a ribonucleoside 5'-triphosphate = RNA(n+1) + diphosphate. Functionally, promotes RNA polymerase assembly. Latches the N- and C-terminal regions of the beta' subunit thereby facilitating its interaction with the beta and alpha subunits. The polypeptide is DNA-directed RNA polymerase subunit omega (Agathobacter rectalis (strain ATCC 33656 / DSM 3377 / JCM 17463 / KCTC 5835 / VPI 0990) (Eubacterium rectale)).